The sequence spans 402 residues: Leucine aminopeptidase 1 (402 aa).

The first 18 residues, 1–18 (MKISNASLLALLLPAASA), serve as a signal peptide directing secretion. A propeptide spanning residues 19 to 92 (RFVEQAEQNR…GTFNKRPYKK (74 aa)) is cleaved from the precursor. Residues asparagine 111 and asparagine 184 are each glycosylated (N-linked (GlcNAc...) asparagine). Zn(2+) is bound by residues histidine 192, aspartate 211, glutamate 250, and aspartate 277. Asparagine 304 is a glycosylation site (N-linked (GlcNAc...) asparagine). The cysteines at positions 326 and 330 are disulfide-linked. Histidine 359 is a Zn(2+) binding site.

Belongs to the peptidase M28 family. M28E subfamily. In terms of assembly, monomer. Zn(2+) is required as a cofactor.

The protein localises to the secreted. Functionally, extracellular aminopeptidase that allows assimilation of proteinaceous substrates. This chain is Leucine aminopeptidase 1 (lap1), found in Neurospora crassa (strain ATCC 24698 / 74-OR23-1A / CBS 708.71 / DSM 1257 / FGSC 987).